A 286-amino-acid chain; its full sequence is ATP synthase gamma chain (286 aa).

The protein belongs to the ATPase gamma chain family. F-type ATPases have 2 components, CF(1) - the catalytic core - and CF(0) - the membrane proton channel. CF(1) has five subunits: alpha(3), beta(3), gamma(1), delta(1), epsilon(1). CF(0) has three main subunits: a, b and c.

The protein localises to the cell inner membrane. Its function is as follows. Produces ATP from ADP in the presence of a proton gradient across the membrane. The gamma chain is believed to be important in regulating ATPase activity and the flow of protons through the CF(0) complex. This chain is ATP synthase gamma chain, found in Marinomonas sp. (strain MWYL1).